Here is a 353-residue protein sequence, read N- to C-terminus: MKIDANKEKALSAVLGQIEKQFGKGSIMKLGENRSMDVETISTGSLSLDVALGAGGLPLGRIVEIYGPESSGKTTLTLEVIAAAQREGKVCAFIDAEHALDPIYAQKLGVDIDNLLCSQPDTGEQALEICDALTRSGAVDVIIVDSVAALTPKAEIEGEIGDSHMGLAARMMSQAMRKLAGNLKQSNTLLIFINQIRMKIGVMFGNPETTTGGNALKFYASVRLDIRRTGAIKDREEVIGNETRVKVVKNKIAAPFKQAEFQILYGEGINRTGELVDLGVMHKLIEKSGAWYSYKGDKIGQGRANAGKYLVENPEIGAEIDQALRAMLLGGGQAVAQSATGDENVDLETGEVF.

Position 67 to 74 (67 to 74 (GPESSGKT)) interacts with ATP.

This sequence belongs to the RecA family.

The protein localises to the cytoplasm. Its function is as follows. Can catalyze the hydrolysis of ATP in the presence of single-stranded DNA, the ATP-dependent uptake of single-stranded DNA by duplex DNA, and the ATP-dependent hybridization of homologous single-stranded DNAs. It interacts with LexA causing its activation and leading to its autocatalytic cleavage. This is Protein RecA from Shewanella loihica (strain ATCC BAA-1088 / PV-4).